The primary structure comprises 406 residues: Probable endo-xylogalacturonan hydrolase A (406 aa).

Residues 1 to 18 (MTLYRNLLLLASLGLSYA) form the signal peptide. Residue asparagine 84 is glycosylated (N-linked (GlcNAc...) asparagine). PbH1 repeat units follow at residues 183–213 (ATNV…DIGE) and 214–235 (STYV…ALKP). Catalysis depends on aspartate 228, which acts as the Proton donor. Histidine 251 is a catalytic residue. PbH1 repeat units lie at residues 266–289 (VKNI…KTYP), 299–320 (VSNV…QIQS), and 333–375 (PGNA…SISG). Residues asparagine 278 and asparagine 301 are each glycosylated (N-linked (GlcNAc...) asparagine).

This sequence belongs to the glycosyl hydrolase 28 family.

The protein resides in the secreted. Its function is as follows. Pectinolytic enzyme involved in the degradation of xylogalacturonan (xga), a galacturonan backbone heavily substituted with xylose, and which is one important component of the hairy regions of pectin. Activity requires a galacturonic acid backbone substituted with xylose. The protein is Probable endo-xylogalacturonan hydrolase A (xghA) of Aspergillus niger (strain ATCC MYA-4892 / CBS 513.88 / FGSC A1513).